A 111-amino-acid chain; its full sequence is Flagellar hook-basal body complex protein FliE (111 aa).

This sequence belongs to the FliE family.

The protein localises to the bacterial flagellum basal body. The chain is Flagellar hook-basal body complex protein FliE from Brucella abortus (strain S19).